A 184-amino-acid chain; its full sequence is Oligoribonuclease (184 aa).

An Exonuclease domain is found at 7-170 (LIWIDLEMTG…DDIYESIEEL (164 aa)). Residue Tyr128 is part of the active site.

This sequence belongs to the oligoribonuclease family.

The protein localises to the cytoplasm. In terms of biological role, 3'-to-5' exoribonuclease specific for small oligoribonucleotides. In Hydrogenovibrio crunogenus (strain DSM 25203 / XCL-2) (Thiomicrospira crunogena), this protein is Oligoribonuclease.